The chain runs to 496 residues: Bifunctional protein HldE (496 aa).

The tract at residues 1–335 (MIKHNPPSPE…GALFRSHGPT (335 aa)) is ribokinase. 211-214 (NRKE) serves as a coordination point for ATP. Asp280 is a catalytic residue. Residues 363–496 (FTNGCFDILH…IGKLRAGSTS (134 aa)) are cytidylyltransferase.

The protein in the N-terminal section; belongs to the carbohydrate kinase PfkB family. It in the C-terminal section; belongs to the cytidylyltransferase family. In terms of assembly, homodimer.

It catalyses the reaction D-glycero-beta-D-manno-heptose 7-phosphate + ATP = D-glycero-beta-D-manno-heptose 1,7-bisphosphate + ADP + H(+). It carries out the reaction D-glycero-beta-D-manno-heptose 1-phosphate + ATP + H(+) = ADP-D-glycero-beta-D-manno-heptose + diphosphate. Its pathway is nucleotide-sugar biosynthesis; ADP-L-glycero-beta-D-manno-heptose biosynthesis; ADP-L-glycero-beta-D-manno-heptose from D-glycero-beta-D-manno-heptose 7-phosphate: step 1/4. It participates in nucleotide-sugar biosynthesis; ADP-L-glycero-beta-D-manno-heptose biosynthesis; ADP-L-glycero-beta-D-manno-heptose from D-glycero-beta-D-manno-heptose 7-phosphate: step 3/4. Functionally, catalyzes the phosphorylation of D-glycero-D-manno-heptose 7-phosphate at the C-1 position to selectively form D-glycero-beta-D-manno-heptose-1,7-bisphosphate. Catalyzes the ADP transfer from ATP to D-glycero-beta-D-manno-heptose 1-phosphate, yielding ADP-D-glycero-beta-D-manno-heptose. The chain is Bifunctional protein HldE from Mesorhizobium japonicum (strain LMG 29417 / CECT 9101 / MAFF 303099) (Mesorhizobium loti (strain MAFF 303099)).